The chain runs to 358 residues: 3-dehydroquinate synthase (358 aa).

NAD(+)-binding positions include 70–75, 104–108, 128–129, Lys141, and Lys150; these read DGEAHK, GVIGD, and TT. Glu183, His246, and His263 together coordinate Zn(2+).

This sequence belongs to the sugar phosphate cyclases superfamily. Dehydroquinate synthase family. NAD(+) serves as cofactor. Requires Co(2+) as cofactor. It depends on Zn(2+) as a cofactor.

Its subcellular location is the cytoplasm. The catalysed reaction is 7-phospho-2-dehydro-3-deoxy-D-arabino-heptonate = 3-dehydroquinate + phosphate. It participates in metabolic intermediate biosynthesis; chorismate biosynthesis; chorismate from D-erythrose 4-phosphate and phosphoenolpyruvate: step 2/7. Functionally, catalyzes the conversion of 3-deoxy-D-arabino-heptulosonate 7-phosphate (DAHP) to dehydroquinate (DHQ). This is 3-dehydroquinate synthase from Bordetella bronchiseptica (strain ATCC BAA-588 / NCTC 13252 / RB50) (Alcaligenes bronchisepticus).